The sequence spans 218 residues: Monomethylamine corrinoid protein 2 (218 aa).

A B12-binding N-terminal domain is found at 1–91 (MTNTEIFNKL…ELEKTKVEGE (91 aa)). Residues 94-218 (TGLAITFVAE…AAKVALNVMK (125 aa)) enclose the B12-binding domain. Methylcob(III)alamin is bound at residue H107.

This sequence belongs to the methylamine corrinoid protein family. As to quaternary structure, can form a complex with MtmB.

Its pathway is one-carbon metabolism; methanogenesis from methylamine. Acts as a methyl group carrier between MtmB and MtbA. The polypeptide is Monomethylamine corrinoid protein 2 (mtmC2) (Methanosarcina mazei (strain ATCC BAA-159 / DSM 3647 / Goe1 / Go1 / JCM 11833 / OCM 88) (Methanosarcina frisia)).